The chain runs to 436 residues: Chorion-specific transcription factor GCMa (436 aa).

The segment at residues 14–169 is a DNA-binding region (GCM); sequence LSWDINDMKL…KLEAEARRAM (156 aa). Residues cysteine 76, cysteine 82, cysteine 86, cysteine 113, cysteine 116, cysteine 125, histidine 152, and histidine 154 each coordinate Zn(2+).

Post-translationally, polyubiquitinated in the presence of UBE2D2 and FBXW2 (in vitro).

The protein resides in the nucleus. Functionally, transcription factor involved in the control of expression of placental growth factor (PGF) and other placenta-specific genes. Binds to the trophoblast-specific element 2 (TSE2) of the aromatase gene enhancer. Binds to the SYDE1 promoter. Has a central role in mediating the differentiation of trophoblast cells along both the villous and extravillous pathways in placental development. In Rattus norvegicus (Rat), this protein is Chorion-specific transcription factor GCMa (Gcm1).